We begin with the raw amino-acid sequence, 310 residues long: UPF0324 membrane protein GSU2818 (310 aa).

The next 9 helical transmembrane spans lie at 11–33 (FTIL…VMGI), 53–72 (MLLQ…GEVI), 79–97 (IWYS…YGLG), 107–129 (SALI…APVL), 136–158 (TAVA…PLVG), 193–215 (ALAI…VMAA), 227–244 (IPLF…RTLL), 254–273 (LAGV…GAGL), and 286–308 (LVQA…KLPW).

It belongs to the UPF0324 family.

The protein resides in the cell membrane. The polypeptide is UPF0324 membrane protein GSU2818 (Geobacter sulfurreducens (strain ATCC 51573 / DSM 12127 / PCA)).